Here is a 1029-residue protein sequence, read N- to C-terminus: Endosome/lysosome-associated apoptosis and autophagy regulator family member 2 (1029 aa).

Positions 1–47 (MLFRARGPVRGRGWGRPAEAPRRGRSPPWSPAWICCWALAGCQAAWA) are cleaved as a signal peptide. Residues 48-929 (GDLPSSSSRP…TCETVDFWLK (882 aa)) are Extracellular-facing. Residue Asn169 is glycosylated (N-linked (GlcNAc...) asparagine). 3 disulfides stabilise this stretch: Cys293-Cys310, Cys323-Cys346, and Cys326-Cys358. Asn405 and Asn691 each carry an N-linked (GlcNAc...) asparagine glycan. An MRH domain is found at 672 to 877 (SDCFFYHEKE…LWESAEACPL (206 aa)). 4 disulfides stabilise this stretch: Cys674–Cys720, Cys730–Cys758, Cys827–Cys863, and Cys839–Cys875. Residues 930-950 (VGAGVGAFTAVLLVALTCYFW) form a helical membrane-spanning segment. Residues 951–1029 (KKNQKLEYKY…QLKTSRSPNI (79 aa)) are Cytoplasmic-facing. Ser1018 is subject to Phosphoserine.

Belongs to the ELAPOR family.

The protein localises to the cell membrane. Functionally, functions as a regulator of the BMP signaling pathway and may be involved in epidermal differentiation. This Homo sapiens (Human) protein is Endosome/lysosome-associated apoptosis and autophagy regulator family member 2.